Reading from the N-terminus, the 464-residue chain is Argininosuccinate lyase (464 aa).

It belongs to the lyase 1 family. Argininosuccinate lyase subfamily.

It localises to the cytoplasm. It carries out the reaction 2-(N(omega)-L-arginino)succinate = fumarate + L-arginine. It participates in amino-acid biosynthesis; L-arginine biosynthesis; L-arginine from L-ornithine and carbamoyl phosphate: step 3/3. The chain is Argininosuccinate lyase from Pseudomonas aeruginosa (strain UCBPP-PA14).